Reading from the N-terminus, the 121-residue chain is Large ribosomal subunit protein uL24 (121 aa).

This sequence belongs to the universal ribosomal protein uL24 family. As to quaternary structure, part of the 50S ribosomal subunit.

In terms of biological role, one of two assembly initiator proteins, it binds directly to the 5'-end of the 23S rRNA, where it nucleates assembly of the 50S subunit. Functionally, located at the polypeptide exit tunnel on the outside of the subunit. The chain is Large ribosomal subunit protein uL24 from Pyrococcus abyssi (strain GE5 / Orsay).